A 229-amino-acid chain; its full sequence is Prolactin (229 aa).

The signal sequence occupies residues 1–30; the sequence is MSNRGASLKGLFLAVLLVSNTLLTKEGVTS. Intrachain disulfides connect cysteine 34–cysteine 41, cysteine 88–cysteine 204, and cysteine 221–cysteine 229.

Belongs to the somatotropin/prolactin family.

The protein resides in the secreted. The protein is Prolactin (PRL) of Gallus gallus (Chicken).